The chain runs to 304 residues: ATP phosphoribosyltransferase (304 aa).

It belongs to the ATP phosphoribosyltransferase family.

Its subcellular location is the cytoplasm. It carries out the reaction 1-(5-phospho-beta-D-ribosyl)-ATP + diphosphate = 5-phospho-alpha-D-ribose 1-diphosphate + ATP. The protein operates within amino-acid biosynthesis; L-histidine biosynthesis; L-histidine from 5-phospho-alpha-D-ribose 1-diphosphate: step 1/9. Its function is as follows. Catalyzes the condensation of ATP and 5-phosphoribose 1-diphosphate to form N'-(5'-phosphoribosyl)-ATP (PR-ATP). Has a crucial role in the pathway because the rate of histidine biosynthesis seems to be controlled primarily by regulation of the enzymatic activity. This is ATP phosphoribosyltransferase (HIS1) from Debaryomyces hansenii (strain ATCC 36239 / CBS 767 / BCRC 21394 / JCM 1990 / NBRC 0083 / IGC 2968) (Yeast).